Consider the following 168-residue polypeptide: Peptide deformylase 2 (168 aa).

Fe cation is bound by residues Cys91 and His133. The active site involves Glu134. Residue His137 participates in Fe cation binding.

This sequence belongs to the polypeptide deformylase family. The cofactor is Fe(2+).

It catalyses the reaction N-terminal N-formyl-L-methionyl-[peptide] + H2O = N-terminal L-methionyl-[peptide] + formate. Functionally, removes the formyl group from the N-terminal Met of newly synthesized proteins. Requires at least a dipeptide for an efficient rate of reaction. N-terminal L-methionine is a prerequisite for activity but the enzyme has broad specificity at other positions. The polypeptide is Peptide deformylase 2 (Vibrio vulnificus (strain CMCP6)).